We begin with the raw amino-acid sequence, 186 residues long: MEKYLIVGLGNPGSNYAKTRHNVGFMVINEICNKLNLSLDSSKFNGIFTKTIYNNSIVFFCQPTTYMNLSGEFVIKMLNFYNIPIKNLIVIYDDVDTKLGTIKLRKKGSSGGQNGIKNIINILKTDEIKRIRIGIDKDPHIKLDQYVLSNFKIDELVIIKPAIIKGALATLAAIGEDFDKVMNKFN.

Position 16 (Y16) interacts with tRNA. The Proton acceptor role is filled by H21. Residues Y66, N68, and N114 each contribute to the tRNA site.

This sequence belongs to the PTH family. In terms of assembly, monomer.

It localises to the cytoplasm. The catalysed reaction is an N-acyl-L-alpha-aminoacyl-tRNA + H2O = an N-acyl-L-amino acid + a tRNA + H(+). Functionally, hydrolyzes ribosome-free peptidyl-tRNAs (with 1 or more amino acids incorporated), which drop off the ribosome during protein synthesis, or as a result of ribosome stalling. Catalyzes the release of premature peptidyl moieties from peptidyl-tRNA molecules trapped in stalled 50S ribosomal subunits, and thus maintains levels of free tRNAs and 50S ribosomes. This chain is Peptidyl-tRNA hydrolase, found in Ureaplasma parvum serovar 3 (strain ATCC 700970).